The primary structure comprises 300 residues: Delta-9 desaturase-like 4 protein (300 aa).

A run of 2 helical transmembrane segments spans residues 39-59 (VVVI…WEAL) and 61-81 (FGLV…HRNL). The Histidine box-1 motif lies at 78 to 83 (HRNLSH). A Histidine box-2 motif is present at residues 115–119 (HRFHH). 2 consecutive transmembrane segments (helical) span residues 175–195 (IAVH…LPYL) and 200–220 (GVGI…CHIW). Positions 247-251 (HNNHH) match the Histidine box-3 motif.

The protein belongs to the fatty acid desaturase type 1 family. It depends on Fe cation as a cofactor.

The protein localises to the endoplasmic reticulum membrane. It functions in the pathway lipid metabolism; polyunsaturated fatty acid biosynthesis. The chain is Delta-9 desaturase-like 4 protein from Arabidopsis thaliana (Mouse-ear cress).